The sequence spans 344 residues: tRNA N6-adenosine threonylcarbamoyltransferase (344 aa).

2 residues coordinate Fe cation: histidine 111 and histidine 115. Residues 133–137 (LVSGG), aspartate 166, glycine 179, and asparagine 283 each bind substrate. Fe cation is bound at residue aspartate 311.

It belongs to the KAE1 / TsaD family. The cofactor is Fe(2+).

It localises to the cytoplasm. The catalysed reaction is L-threonylcarbamoyladenylate + adenosine(37) in tRNA = N(6)-L-threonylcarbamoyladenosine(37) in tRNA + AMP + H(+). In terms of biological role, required for the formation of a threonylcarbamoyl group on adenosine at position 37 (t(6)A37) in tRNAs that read codons beginning with adenine. Is involved in the transfer of the threonylcarbamoyl moiety of threonylcarbamoyl-AMP (TC-AMP) to the N6 group of A37, together with TsaE and TsaB. TsaD likely plays a direct catalytic role in this reaction. The chain is tRNA N6-adenosine threonylcarbamoyltransferase from Orientia tsutsugamushi (strain Boryong) (Rickettsia tsutsugamushi).